Consider the following 446-residue polypeptide: D-inositol 3-phosphate glycosyltransferase (446 aa).

Positions 1–21 are disordered; that stretch reads MSHYVGRLGRRSPAGSGRLRL. Histidine 34 contributes to the 1D-myo-inositol 3-phosphate binding site. Residues 40–41 and glycine 48 each bind UDP-N-acetyl-alpha-D-glucosamine; that span reads QP. 1D-myo-inositol 3-phosphate is bound by residues 45–50, lysine 103, tyrosine 136, threonine 160, and arginine 180; that span reads DAGGMN. The UDP-N-acetyl-alpha-D-glucosamine site is built by arginine 255, lysine 260, and valine 321. Positions 330, 331, and 333 each coordinate Mg(2+). Glutamate 343 and glutamate 351 together coordinate UDP-N-acetyl-alpha-D-glucosamine. Threonine 357 contributes to the Mg(2+) binding site.

This sequence belongs to the glycosyltransferase group 1 family. MshA subfamily. In terms of assembly, homodimer.

The catalysed reaction is 1D-myo-inositol 3-phosphate + UDP-N-acetyl-alpha-D-glucosamine = 1D-myo-inositol 2-acetamido-2-deoxy-alpha-D-glucopyranoside 3-phosphate + UDP + H(+). Its function is as follows. Catalyzes the transfer of a N-acetyl-glucosamine moiety to 1D-myo-inositol 3-phosphate to produce 1D-myo-inositol 2-acetamido-2-deoxy-glucopyranoside 3-phosphate in the mycothiol biosynthesis pathway. The sequence is that of D-inositol 3-phosphate glycosyltransferase from Streptomyces scabiei (strain 87.22).